The primary structure comprises 365 residues: NADH-quinone oxidoreductase subunit H (365 aa).

8 consecutive transmembrane segments (helical) span residues 27-47 (LLLI…LTFA), 99-119 (FLFL…WAVV), 133-153 (ALLY…IAGW), 168-188 (AAQV…VLMM), 206-226 (FLNW…ISGV), 268-288 (ILVA…PVDI), 294-314 (IPGV…FLWF), and 329-349 (LGWK…GAVM).

The protein belongs to the complex I subunit 1 family. In terms of assembly, NDH-1 is composed of 14 different subunits. Subunits NuoA, H, J, K, L, M, N constitute the membrane sector of the complex.

Its subcellular location is the cell inner membrane. The catalysed reaction is a quinone + NADH + 5 H(+)(in) = a quinol + NAD(+) + 4 H(+)(out). NDH-1 shuttles electrons from NADH, via FMN and iron-sulfur (Fe-S) centers, to quinones in the respiratory chain. The immediate electron acceptor for the enzyme in this species is believed to be ubiquinone. Couples the redox reaction to proton translocation (for every two electrons transferred, four hydrogen ions are translocated across the cytoplasmic membrane), and thus conserves the redox energy in a proton gradient. This subunit may bind ubiquinone. The protein is NADH-quinone oxidoreductase subunit H of Nitrosomonas eutropha (strain DSM 101675 / C91 / Nm57).